A 514-amino-acid polypeptide reads, in one-letter code: Na(+)/H(+) antiporter NhaB (514 aa).

11 helical membrane-spanning segments follow: residues 13 to 33 (FMGN…IINP), 34 to 54 (LIFF…EFIF), 96 to 116 (VILL…LLLF), 136 to 156 (CFAS…AVVI), 203 to 223 (LMMH…VGEP), 236 to 256 (FVTF…AGLA), 304 to 324 (ALIG…VGII), 349 to 369 (EEAL…AVII), 392 to 412 (LFYL…VGTV), 448 to 468 (ATPN…SPLI), and 479 to 499 (ALPY…FWLV).

It belongs to the NhaB Na(+)/H(+) (TC 2.A.34) antiporter family.

Its subcellular location is the cell inner membrane. The catalysed reaction is 2 Na(+)(in) + 3 H(+)(out) = 2 Na(+)(out) + 3 H(+)(in). Functionally, na(+)/H(+) antiporter that extrudes sodium in exchange for external protons. This is Na(+)/H(+) antiporter NhaB from Proteus mirabilis (strain HI4320).